Consider the following 253-residue polypeptide: Transmembrane protein 69 (253 aa).

5 consecutive transmembrane segments (helical) span residues 104–124 (ALYL…LMNV), 137–157 (VAYG…FAIP), 165–185 (DWMN…ALLF), 192–212 (AAVL…ALLP), and 223–243 (AILT…SSVY).

It localises to the membrane. The chain is Transmembrane protein 69 (tmem69) from Xenopus tropicalis (Western clawed frog).